We begin with the raw amino-acid sequence, 165 residues long: Polcalcin Cup a 4 (165 aa).

EF-hand domains lie at 22-57, 58-86, 91-126, and 127-162; these read QSVH…MGSE, VDEA…FVDL, ATVK…VGEP, and CTIE…EMTD. Residues D35, N37, D39, K41, E46, D71, D73, D75, Y77, E82, D104, D106, N108, T110, E115, D140, N142, D144, and E151 each contribute to the Ca(2+) site.

As to quaternary structure, may exist as monomer and dimer. As to expression, expressed in mature pollen grains.

The protein is Polcalcin Cup a 4 of Hesperocyparis arizonica (Arizona cypress).